Consider the following 127-residue polypeptide: Holo-[acyl-carrier-protein] synthase (127 aa).

Positions 7 and 53 each coordinate Mg(2+).

This sequence belongs to the P-Pant transferase superfamily. AcpS family. The cofactor is Mg(2+).

Its subcellular location is the cytoplasm. It catalyses the reaction apo-[ACP] + CoA = holo-[ACP] + adenosine 3',5'-bisphosphate + H(+). Functionally, transfers the 4'-phosphopantetheine moiety from coenzyme A to a Ser of acyl-carrier-protein. The chain is Holo-[acyl-carrier-protein] synthase from Herpetosiphon aurantiacus (strain ATCC 23779 / DSM 785 / 114-95).